We begin with the raw amino-acid sequence, 418 residues long: Maltoporin (418 aa).

The first 26 residues, 1 to 26 (MLPMNRNTLGLAVTIATVFVSSTVTA), serve as a signal peptide directing secretion.

This sequence belongs to the porin LamB (TC 1.B.3) family. As to quaternary structure, homotrimer formed of three 18-stranded antiparallel beta-barrels, containing three independent channels.

The protein localises to the cell outer membrane. It carries out the reaction beta-maltose(in) = beta-maltose(out). In terms of biological role, involved in the transport of maltose and maltodextrins. This is Maltoporin from Photobacterium profundum (strain SS9).